A 283-amino-acid polypeptide reads, in one-letter code: Acetylglutamate kinase (283 aa).

Substrate contacts are provided by residues 63 to 64, Arg-85, and Asn-178; that span reads GG.

The protein belongs to the acetylglutamate kinase family. ArgB subfamily.

It is found in the cytoplasm. It catalyses the reaction N-acetyl-L-glutamate + ATP = N-acetyl-L-glutamyl 5-phosphate + ADP. It functions in the pathway amino-acid biosynthesis; L-arginine biosynthesis; N(2)-acetyl-L-ornithine from L-glutamate: step 2/4. Its function is as follows. Catalyzes the ATP-dependent phosphorylation of N-acetyl-L-glutamate. This chain is Acetylglutamate kinase, found in Prochlorococcus marinus (strain MIT 9301).